The following is a 229-amino-acid chain: Octanoyltransferase (229 aa).

One can recognise a BPL/LPL catalytic domain in the interval 47–225; it reads PSSPEAVWIL…SLAARFHLAW (179 aa). Substrate-binding positions include 89 to 96, 156 to 158, and 169 to 171; these read RGGEVTHH, AIG, and GLA. Residue C187 is the Acyl-thioester intermediate of the active site.

Belongs to the LipB family.

It localises to the cytoplasm. The catalysed reaction is octanoyl-[ACP] + L-lysyl-[protein] = N(6)-octanoyl-L-lysyl-[protein] + holo-[ACP] + H(+). Its pathway is protein modification; protein lipoylation via endogenous pathway; protein N(6)-(lipoyl)lysine from octanoyl-[acyl-carrier-protein]: step 1/2. Catalyzes the transfer of endogenously produced octanoic acid from octanoyl-acyl-carrier-protein onto the lipoyl domains of lipoate-dependent enzymes. Lipoyl-ACP can also act as a substrate although octanoyl-ACP is likely to be the physiological substrate. This chain is Octanoyltransferase, found in Synechococcus sp. (strain CC9902).